Reading from the N-terminus, the 230-residue chain is Large ribosomal subunit protein uL1 (230 aa).

The protein belongs to the universal ribosomal protein uL1 family. As to quaternary structure, part of the 50S ribosomal subunit.

In terms of biological role, binds directly to 23S rRNA. The L1 stalk is quite mobile in the ribosome, and is involved in E site tRNA release. Its function is as follows. Protein L1 is also a translational repressor protein, it controls the translation of the L11 operon by binding to its mRNA. This chain is Large ribosomal subunit protein uL1, found in Bradyrhizobium diazoefficiens (strain JCM 10833 / BCRC 13528 / IAM 13628 / NBRC 14792 / USDA 110).